The primary structure comprises 119 residues: Small ribosomal subunit protein bS16 (119 aa).

Residues 96-107 (RKKRRAYRQRRS) are compositionally biased toward basic residues. Positions 96-119 (RKKRRAYRQRRSTQREEAAKDATK) are disordered. Positions 108–119 (TQREEAAKDATK) are enriched in basic and acidic residues.

The protein belongs to the bacterial ribosomal protein bS16 family.

This is Small ribosomal subunit protein bS16 from Chlamydia pneumoniae (Chlamydophila pneumoniae).